A 310-amino-acid polypeptide reads, in one-letter code: Protease HtpX homolog (310 aa).

2 helical membrane-spanning segments follow: residues 16 to 36 and 55 to 75; these read NAVL…VDAI and IFPT…LVCI. Residue histidine 166 participates in Zn(2+) binding. Residue glutamate 167 is part of the active site. Histidine 170 is a Zn(2+) binding site. The next 2 membrane-spanning stretches (helical) occupy residues 182-202 and 214-234; these read VGIL…FFMG and MILW…QMYL. Glutamate 239 lines the Zn(2+) pocket.

It belongs to the peptidase M48B family. Zn(2+) serves as cofactor.

It localises to the cell inner membrane. The chain is Protease HtpX homolog from Helicobacter pylori (strain J99 / ATCC 700824) (Campylobacter pylori J99).